The sequence spans 122 residues: Double-headed protease inhibitor, submandibular gland (122 aa).

Kazal-like domains lie at 10 to 70 and 71 to 121; these read GGRK…ECDI and ECTQ…QCQS. Intrachain disulfides connect C16–C50, C28–C47, C36–C68, C72–C101, C79–C98, and C87–C119.

It is found in the secreted. This inhibitor is composed of two homologous actively inhibiting halves: one which inhibits trypsin, the other which inhibits elastase. The protein is Double-headed protease inhibitor, submandibular gland of Panthera uncia (Snow leopard).